We begin with the raw amino-acid sequence, 301 residues long: G-protein coupled receptor homolog U51 (301 aa).

At 1–15 (MEKETKSLAWPATAE) the chain is on the extracellular side. A helical membrane pass occupies residues 16-36 (FYGWVFIFSSIQLCTMVLLTV). The Cytoplasmic portion of the chain corresponds to 37 to 48 (RFNSFKVGREYA). Residues 49–69 (VFTFAGMSFNCFLLPIKMGLL) form a helical membrane-spanning segment. Residues 70–82 (SGHWSLPRDFCAI) are Extracellular-facing. A helical membrane pass occupies residues 83 to 103 (LLYIDDFSIYFSSWSLVFMAI). The Cytoplasmic segment spans residues 104–122 (ERINHFCYSTPLLNENSKA). The helical transmembrane segment at 123–143 (LAKVCFPIVWIISGVQALQML) threads the bilayer. The Extracellular segment spans residues 144-168 (NNYKATALQNETPQCFLAFLRSGYD). The helical transmembrane segment at 169 to 189 (MWLMLVYSVMIPVMLVFIYIY) threads the bilayer. Residues 190 to 199 (SKNFMLLKDE) lie on the Cytoplasmic side of the membrane. A helical membrane pass occupies residues 200–220 (LSTVTTYLCIYLLLGTIAHLP). Topologically, residues 221–238 (KAGLSEIESDKIFYGLRD) are extracellular. Residues 239 to 259 (IFMALPVLKVYYIPVMAYCMA) traverse the membrane as a helical segment. Over 260–301 (CDDHTVPVRLCSIWLVNLCKKCFSCTRREKESDLEVGIKMLK) the chain is Cytoplasmic.

It belongs to the G-protein coupled receptor 1 family.

The protein resides in the host cell membrane. This Homo sapiens (Human) protein is G-protein coupled receptor homolog U51 (U51).